Consider the following 472-residue polypeptide: Eukaryotic translation initiation factor 2 subunit 3 (472 aa).

At A2 the chain carries N-acetylalanine. Phosphoserine is present on S16. The 210-residue stretch at 39 to 248 folds into the tr-type G domain; it reads QATINIGTIG…IVKKIPVPPR (210 aa). Residues 48–55 are G1; the sequence is GHVAHGKS. Residue 51–56 coordinates GTP; that stretch reads AHGKST. The tract at residues 76 to 80 is G2; that stretch reads NITIK. The interval 134–137 is G3; the sequence is DCPG. GTP-binding positions include 190–193 and 225–227; these read NKID and SAQ. Residues 190–193 are G4; sequence NKID. A G5 region spans residues 225–227; that stretch reads SAQ. Residues 457-469 are interacts with CDC123; the sequence is GQIRRGVTIKPTV.

It belongs to the TRAFAC class translation factor GTPase superfamily. Classic translation factor GTPase family. EIF2G subfamily. In terms of assembly, eukaryotic translation initiation factor 2 eIF2 is a heterotrimeric complex composed of an alpha (EIF2S1), a beta (EIF2S2) and a gamma (EIF2S3) chain. eIF2 is member of the 43S pre-initiation complex (43S PIC). Interacts (via C-terminus) with CDC123; the interaction is direct.

Its subcellular location is the cytoplasm. It is found in the cytosol. It carries out the reaction GTP + H2O = GDP + phosphate + H(+). Member of the eIF2 complex that functions in the early steps of protein synthesis by forming a ternary complex with GTP and initiator tRNA. This complex binds to a 40S ribosomal subunit, followed by mRNA binding to form the 43S pre-initiation complex (43S PIC). Junction of the 60S ribosomal subunit to form the 80S initiation complex is preceded by hydrolysis of the GTP bound to eIF2 and release of an eIF2-GDP binary complex. In order for eIF2 to recycle and catalyze another round of initiation, the GDP bound to eIF2 must exchange with GTP by way of a reaction catalyzed by eIF-2B. The polypeptide is Eukaryotic translation initiation factor 2 subunit 3 (EIF2S3) (Pongo abelii (Sumatran orangutan)).